The following is a 77-amino-acid chain: Small ribosomal subunit protein bS21 (77 aa).

Residues 55 to 77 are disordered; sequence RKLARKRAQREGLMSNGRISALR.

The protein belongs to the bacterial ribosomal protein bS21 family.

The protein is Small ribosomal subunit protein bS21 of Bartonella quintana (strain Toulouse) (Rochalimaea quintana).